Reading from the N-terminus, the 328-residue chain is Malate dehydrogenase (328 aa).

Residue 12–18 participates in NAD(+) binding; sequence GAAGQIA. Arginine 93 and arginine 99 together coordinate substrate. NAD(+) is bound by residues asparagine 106, glutamine 113, and 130 to 132; that span reads VGN. Substrate contacts are provided by asparagine 132 and arginine 163. Histidine 188 (proton acceptor) is an active-site residue.

The protein belongs to the LDH/MDH superfamily. MDH type 2 family.

It catalyses the reaction (S)-malate + NAD(+) = oxaloacetate + NADH + H(+). Catalyzes the reversible oxidation of malate to oxaloacetate. The polypeptide is Malate dehydrogenase (Burkholderia cenocepacia (strain HI2424)).